A 206-amino-acid polypeptide reads, in one-letter code: IMPACT family member HI_0722 (206 aa).

This sequence belongs to the IMPACT family.

In Haemophilus influenzae (strain ATCC 51907 / DSM 11121 / KW20 / Rd), this protein is IMPACT family member HI_0722.